The primary structure comprises 431 residues: Ribosomal protein uS12 methylthiotransferase RimO (431 aa).

The 117-residue stretch at 4 to 120 (LKLYVIVLGC…LAESINKTKK (117 aa)) folds into the MTTase N-terminal domain. Residues C13, C49, C83, C150, C154, and C157 each contribute to the [4Fe-4S] cluster site. The region spanning 136 to 365 (DSDLPYAYVK…MEVQAEISFL (230 aa)) is the Radical SAM core domain. One can recognise a TRAM domain in the interval 368-431 (QRLVGKVIDV…TYDLEGELVE (64 aa)).

This sequence belongs to the methylthiotransferase family. RimO subfamily. It depends on [4Fe-4S] cluster as a cofactor.

The protein resides in the cytoplasm. It carries out the reaction L-aspartate(89)-[ribosomal protein uS12]-hydrogen + (sulfur carrier)-SH + AH2 + 2 S-adenosyl-L-methionine = 3-methylsulfanyl-L-aspartate(89)-[ribosomal protein uS12]-hydrogen + (sulfur carrier)-H + 5'-deoxyadenosine + L-methionine + A + S-adenosyl-L-homocysteine + 2 H(+). Functionally, catalyzes the methylthiolation of an aspartic acid residue of ribosomal protein uS12. The chain is Ribosomal protein uS12 methylthiotransferase RimO from Fervidobacterium nodosum (strain ATCC 35602 / DSM 5306 / Rt17-B1).